We begin with the raw amino-acid sequence, 150 residues long: UPF0756 membrane protein YE1142 (150 aa).

4 helical membrane passes run 1-21 (MAAL…GIIS), 51-71 (YGLT…IASG), 88-108 (ILAI…VSLM), and 114-134 (VVAG…GVPV).

The protein belongs to the UPF0756 family.

Its subcellular location is the cell membrane. The protein is UPF0756 membrane protein YE1142 of Yersinia enterocolitica serotype O:8 / biotype 1B (strain NCTC 13174 / 8081).